The primary structure comprises 88 residues: Small ribosomal subunit protein bS16 (88 aa).

The protein belongs to the bacterial ribosomal protein bS16 family.

In Pelotomaculum thermopropionicum (strain DSM 13744 / JCM 10971 / SI), this protein is Small ribosomal subunit protein bS16.